The primary structure comprises 798 residues: Probable serine/threonine-protein kinase DDB_G0276461 (798 aa).

In terms of domain architecture, Protein kinase spans 54–324; the sequence is VTEVKLVAEG…DLLNYLNEIR (271 aa). ATP-binding positions include 60–68 and K82; that span reads VAEGGFGFV. Residue D185 is the Proton acceptor of the active site. Disordered regions lie at residues 330-538, 553-645, and 659-798; these read GLQT…NGNF, TNGS…SYNN, and SSAS…FGIL. 6 stretches are compositionally biased toward low complexity: residues 335–406, 429–490, 506–538, 557–603, 611–642, and 659–678; these read SSNN…NTPN, SNSN…NNNN, PSPS…NGNF, TNFE…INNS, SSGS…NSGS, and SSAS…NSWN. Residues 679-697 show a composition bias toward polar residues; that stretch reads VTLTPSQSNKNSTGNLKPL. Residues 698–716 are compositionally biased toward low complexity; the sequence is NNNNNNNNNNNNRFANNTN. Polar residues predominate over residues 717–769; the sequence is SSRDYSFDFSSPNTSNNNDFGSFVQPSSSSSLNTTHFSKPNYNVNLNQTTSMT. Over residues 770 to 790 the composition is skewed to low complexity; it reads NNYNNNNYNNNNNSNNNNNNS.

The protein belongs to the protein kinase superfamily. Ser/Thr protein kinase family.

The catalysed reaction is L-seryl-[protein] + ATP = O-phospho-L-seryl-[protein] + ADP + H(+). It catalyses the reaction L-threonyl-[protein] + ATP = O-phospho-L-threonyl-[protein] + ADP + H(+). This Dictyostelium discoideum (Social amoeba) protein is Probable serine/threonine-protein kinase DDB_G0276461.